We begin with the raw amino-acid sequence, 278 residues long: MSQEFVEDYSRTGSSDDEDSGAYDEWIPSFCSRFGHEYFCQVPTEFIEDDFNMTSLSQEVPHYRKALDLILDLEAMSDEEEDEDDVVEEDEVDQEMQSNDGHDEGKRRNKSPVVNKSIIEHAAEQLYGLIHARFILTKPGLQAMAEKFDHKEFGTCPRYYCNGMQLLPCGLSDTVGKHTVRLYCPSCQDLYLPQSSRFLCLEGAFWGTSFPGVFLKHFKELEEYVERKSKESYELKVFGFRINDEAVSGPRMKWLRQYPSTEEDWEEFAKCEFETPAV.

2 disordered regions span residues 1 to 22 (MSQE…DSGA) and 78 to 111 (DEEE…RNKS). Ser2 bears the N-acetylserine mark. Residue Ser2 is modified to Phosphoserine. Positions 78 to 94 (DEEEDEDDVVEEDEVDQ) are enriched in acidic residues.

The protein belongs to the casein kinase 2 subunit beta family. Tetramer composed of an alpha subunit, an alpha' subunit, one beta subunit and one beta' subunit. Interacts with FACT subunits POB3 and SPT16. interacts with YTA7. Phosphorylated by alpha subunit.

Its function is as follows. Regulatory subunit of casein kinase II/CK2. As part of the kinase complex regulates the basal catalytic activity of the alpha subunit a constitutively active serine/threonine-protein kinase that phosphorylates a large number of substrates containing acidic residues C-terminal to the phosphorylated serine or threonine. In Saccharomyces cerevisiae (strain ATCC 204508 / S288c) (Baker's yeast), this protein is Casein kinase II subunit beta (CKB1).